A 376-amino-acid chain; its full sequence is Lipid-A-disaccharide synthase (376 aa).

The protein belongs to the LpxB family.

The catalysed reaction is a lipid X + a UDP-2-N,3-O-bis[(3R)-3-hydroxyacyl]-alpha-D-glucosamine = a lipid A disaccharide + UDP + H(+). Its pathway is bacterial outer membrane biogenesis; LPS lipid A biosynthesis. In terms of biological role, condensation of UDP-2,3-diacylglucosamine and 2,3-diacylglucosamine-1-phosphate to form lipid A disaccharide, a precursor of lipid A, a phosphorylated glycolipid that anchors the lipopolysaccharide to the outer membrane of the cell. This Hydrogenovibrio crunogenus (strain DSM 25203 / XCL-2) (Thiomicrospira crunogena) protein is Lipid-A-disaccharide synthase.